Here is a 379-residue protein sequence, read N- to C-terminus: UDP-4-amino-4-deoxy-L-arabinose--oxoglutarate aminotransferase (379 aa).

Residue Lys182 is modified to N6-(pyridoxal phosphate)lysine.

The protein belongs to the DegT/DnrJ/EryC1 family. ArnB subfamily. Homodimer. Pyridoxal 5'-phosphate serves as cofactor.

The enzyme catalyses UDP-4-amino-4-deoxy-beta-L-arabinose + 2-oxoglutarate = UDP-beta-L-threo-pentopyranos-4-ulose + L-glutamate. Its pathway is nucleotide-sugar biosynthesis; UDP-4-deoxy-4-formamido-beta-L-arabinose biosynthesis; UDP-4-deoxy-4-formamido-beta-L-arabinose from UDP-alpha-D-glucuronate: step 2/3. The protein operates within bacterial outer membrane biogenesis; lipopolysaccharide biosynthesis. In terms of biological role, catalyzes the conversion of UDP-4-keto-arabinose (UDP-Ara4O) to UDP-4-amino-4-deoxy-L-arabinose (UDP-L-Ara4N). The modified arabinose is attached to lipid A and is required for resistance to polymyxin and cationic antimicrobial peptides. In Salmonella dublin (strain CT_02021853), this protein is UDP-4-amino-4-deoxy-L-arabinose--oxoglutarate aminotransferase.